A 123-amino-acid chain; its full sequence is Fluoride-specific ion channel FluC 1 (123 aa).

Transmembrane regions (helical) follow at residues 1–21 (MVDLLLIGLGGSIGAILRYTL), 34–54 (PLATFLINIIGSFGLGLLYGF), 59–79 (VIWLLLGTGFFGGFTTFSTYI), and 99–119 (LTSIFTGVVFFAAGMWLANFF). Na(+) is bound by residues Gly70 and Thr73.

This sequence belongs to the fluoride channel Fluc/FEX (TC 1.A.43) family.

Its subcellular location is the cell membrane. The catalysed reaction is fluoride(in) = fluoride(out). Na(+) is not transported, but it plays an essential structural role and its presence is essential for fluoride channel function. In terms of biological role, fluoride-specific ion channel. Important for reducing fluoride concentration in the cell, thus reducing its toxicity. The sequence is that of Fluoride-specific ion channel FluC 1 from Carboxydothermus hydrogenoformans (strain ATCC BAA-161 / DSM 6008 / Z-2901).